The chain runs to 113 residues: Protein ORF3 (113 aa).

2 hydrophobic regions span residues 1 to 21 and 32 to 52; these read MGSP…CLCC and AVVG…GLIL. The interval 27–67 is interaction with host HPX; sequence ASRLAAVVGGAAAVPAVVSGVTGLILSPSPSPIFIQPTPSP. The segment at 47 to 71 is interaction with the capsid protein; that stretch reads VTGLILSPSPSPIFIQPTPSPPMSF. Ser-70 is subject to Phosphoserine; by host. The tract at residues 71-113 is homodimerization, and interaction with host AMBP/bikunin; sequence FHNPGLELALDSRPAPLXPLGVTSPSAPPLPPVVDLPQLGLRR. The tract at residues 90-113 is disordered; that stretch reads LGVTSPSAPPLPPVVDLPQLGLRR. An interaction with host SRC, HCK, FYN, PIK3R3 and GRB2 region spans residues 94 to 103; that stretch reads SPSAPPLPPV. A PTAP/PSAP motif motif is present at residues 95 to 98; that stretch reads PSAP.

Belongs to the hepevirus ORF3 protein family. As to quaternary structure, forms homooligomers. Interacts with host SRC, HCK, FYN, PIK3R3 and GRB2 (via SH3 domain); binding does not activate the kinases. Interacts with host AMBP/bikunin and AMBP/alpha-1-microglobulin peptides. Interacts with host HPX/hemopexin. Interacts (when phosphorylated) with capsid protein ORF2. Interacts with host TSG101; this interaction plays a role in viral release from the host cell. Interacts with host SIRPA; this interaction down-regulates the phosphorylation of host IRF3. In terms of processing, palmitoylated in the N-terminus.

The protein localises to the host endoplasmic reticulum membrane. It localises to the host cytoplasm. Its subcellular location is the host cytoskeleton. It is found in the virion. The protein resides in the host cell membrane. Small multifunctional phosphoprotein involved in virion morphogenesis, egress and counteracting host innate immunity. Plays critical roles in the final steps of viral release by interacting with host TSG101, a member of the vacuolar protein-sorting pathway and using other cellular host proteins involved in vesicle formation pathway. Also acts as a viroporin and forms ion conductive pores allowing viral particle release. Impairs the generation of type I interferon by down-regulating host TLR3 and TLR7 as well as their downstream signaling pathways. Down-regulates the phosphorylation of host IRF3 via the interaction with host SIRP-alpha, thereby inhibiting IFN-I expression. Interacts with host microtubules. The chain is Protein ORF3 from Hepatitis E virus genotype 3 (isolate Human/United States/US2) (HEV-3).